We begin with the raw amino-acid sequence, 978 residues long: Probable serine/threonine-protein kinase PLK (978 aa).

Positions 19–36 (IQIQQQQFKQPQQQPQQK) are enriched in low complexity. 2 disordered regions span residues 19–66 (IQIQ…SSIH) and 121–143 (QQQQ…NEPQ). Positions 37–53 (SNSCFSDQENYPANIQP) are enriched in polar residues. Low complexity predominate over residues 54-64 (SSSTSSSSSSS). The region spanning 163–416 (YRQGEFLGKG…LTQILEHDFF (254 aa)) is the Protein kinase domain. ATP contacts are provided by residues 169-177 (LGKGGFAKC) and Lys-192. The active-site Proton acceptor is the Asp-286. 2 disordered regions span residues 463–554 (GTTS…FANL) and 601–638 (ENQQ…TVTT). 2 stretches are compositionally biased toward low complexity: residues 473–492 (HHYQ…NYQQ) and 500–549 (INNM…NINN). Coiled-coil stretches lie at residues 497 to 555 (KKQI…ANLS) and 592 to 630 (IKQQ…INNN). Positions 696–780 (YISQYADFTN…IKYFLNHFTN (85 aa)) constitute a POLO box 1 domain. The interval 798–819 (NNNNNNNVENVTNNNNNNSNNS) is disordered. A POLO box 2 domain is found at 826-904 (YVKKWIKFDN…IYGTLSNNLY (79 aa)). A disordered region spans residues 908 to 978 (PESSFQQLPQ…SIPQPQLINQ (71 aa)). Over residues 913-978 (QQLPQQQYQQ…SIPQPQLINQ (66 aa)) the composition is skewed to low complexity.

This sequence belongs to the protein kinase superfamily. Ser/Thr protein kinase family. CDC5/Polo subfamily.

It carries out the reaction L-seryl-[protein] + ATP = O-phospho-L-seryl-[protein] + ADP + H(+). It catalyses the reaction L-threonyl-[protein] + ATP = O-phospho-L-threonyl-[protein] + ADP + H(+). The polypeptide is Probable serine/threonine-protein kinase PLK (PLK) (Dictyostelium discoideum (Social amoeba)).